Reading from the N-terminus, the 115-residue chain is Large ribosomal subunit protein bL19 (115 aa).

Belongs to the bacterial ribosomal protein bL19 family.

Its function is as follows. This protein is located at the 30S-50S ribosomal subunit interface and may play a role in the structure and function of the aminoacyl-tRNA binding site. The sequence is that of Large ribosomal subunit protein bL19 from Streptococcus thermophilus (strain CNRZ 1066).